A 152-amino-acid chain; its full sequence is MTSKTNMTSNKFAYDFFPWSNDTNSSQQIKNIKPPPKRSNRPTKRTTFTSEQVTLLELEFAKNEYICKDRRGELAQTIELTECQVKTWFQNRRTKKRRCTSPLRKSMMKKSDERSPSPQNPSSQHVQNLQTFFHSWPSHFAYSLPSDQQNNV.

The span at 21–30 (NDTNSSQQIK) shows a compositional bias: polar residues. 2 disordered regions span residues 21-48 (NDTNSSQQIKNIKPPPKRSNRPTKRTTF) and 92-126 (RRTKKRRCTSPLRKSMMKKSDERSPSPQNPSSQHV). Basic residues predominate over residues 35 to 44 (PPKRSNRPTK). Positions 41–100 (RPTKRTTFTSEQVTLLELEFAKNEYICKDRRGELAQTIELTECQVKTWFQNRRTKKRRCT) form a DNA-binding region, homeobox. Residues 116–126 (PSPQNPSSQHV) show a composition bias toward polar residues.

May interact with homeobox protein ceh-14.

It is found in the nucleus. Functionally, probable transcription factor, modulating expression of helix-loop-helix protein mbr-1, perhaps acting in concert with homeobox protein ceh-14. May play a minor role in axon guidance in the DVC interneuron. This Caenorhabditis elegans protein is Homeobox protein ceh-63.